Here is a 423-residue protein sequence, read N- to C-terminus: Maintenance of mitochondrial morphology protein 1 (423 aa).

Topologically, residues 1-20 (MTIPAPIPDKAESSLSFTQG) are lumenal. The chain crosses the membrane as a helical span at residues 21–41 (LLLGQLSIVILIGAFIKFFIF). Residues 42–423 (GDPPSPDVTA…PGSMPGLSMT (382 aa)) are Cytoplasmic-facing. The SMP-LTD domain maps to 115 to 327 (QPESLDWFNV…EPRFQQIELP (213 aa)). Disordered stretches follow at residues 332–372 (RKKN…KEVE) and 387–423 (SLDVPDEGSEDGLRFRRKSKGRDEYAMPGSMPGLSMT). Basic and acidic residues predominate over residues 355 to 372 (RSRDVERDLREEARKEVE).

It belongs to the MMM1 family. As to quaternary structure, homodimer. Component of the ER-mitochondria encounter structure (ERMES) or MDM complex, composed of MMM1, MDM10, MDM12 and MDM34. An MMM1 homodimer associates with one molecule of MDM12 on each side in a pairwise head-to-tail manner, and the SMP-LTD domains of MMM1 and MDM12 generate a continuous hydrophobic tunnel for phospholipid trafficking.

The protein resides in the endoplasmic reticulum membrane. Functionally, component of the ERMES/MDM complex, which serves as a molecular tether to connect the endoplasmic reticulum (ER) and mitochondria. Components of this complex are involved in the control of mitochondrial shape and protein biogenesis, and function in nonvesicular lipid trafficking between the ER and mitochondria. The MDM12-MMM1 subcomplex functions in the major beta-barrel assembly pathway that is responsible for biogenesis of all outer membrane beta-barrel proteins, and acts in a late step after the SAM complex. The MDM10-MDM12-MMM1 subcomplex further acts in the TOM40-specific pathway after the action of the MDM12-MMM1 complex. Essential for establishing and maintaining the structure of mitochondria and maintenance of mtDNA nucleoids. This chain is Maintenance of mitochondrial morphology protein 1, found in Botryotinia fuckeliana (strain B05.10) (Noble rot fungus).